The primary structure comprises 70 residues: DNA-directed RNA polymerase subunit epsilon (70 aa).

It belongs to the RNA polymerase subunit epsilon family. In terms of assembly, RNAP is composed of a core of 2 alpha, a beta and a beta' subunit. The core is associated with a delta subunit, and at least one of epsilon or omega. When a sigma factor is associated with the core the holoenzyme is formed, which can initiate transcription.

The catalysed reaction is RNA(n) + a ribonucleoside 5'-triphosphate = RNA(n+1) + diphosphate. In terms of biological role, a non-essential component of RNA polymerase (RNAP). This Bacillus cereus (strain ZK / E33L) protein is DNA-directed RNA polymerase subunit epsilon.